The primary structure comprises 323 residues: Olfactory receptor 2T35 (323 aa).

Topologically, residues 1–26 are extracellular; that stretch reads MGMEGLLQNSTNFVLTGLITHPAFPG. N9 is a glycosylation site (N-linked (GlcNAc...) asparagine). Residues 27–50 form a helical membrane-spanning segment; the sequence is LLFAVVFSIFVVAITANLVMILLI. Topologically, residues 51 to 58 are cytoplasmic; the sequence is HMDSRLHT. A helical transmembrane segment spans residues 59-80; sequence PMYFLLSQLSIMDTIYICITVP. The Extracellular segment spans residues 81 to 101; it reads KMLQDLLSKDKTISFLGCAVQ. C98 and C189 form a disulfide bridge. A helical membrane pass occupies residues 102–120; that stretch reads IFYLTLIGGEFFLLGLMAY. Over 121–139 the chain is Cytoplasmic; it reads DRYVAVCNPLRYPLLMNRR. The chain crosses the membrane as a helical span at residues 140–158; that stretch reads VCLFMVVGSWVGGSLDGFM. Over 159–195 the chain is Extracellular; sequence LTPVTMSFPFCRSREINHFFCEIPAVLKLSCTDTSLY. A helical transmembrane segment spans residues 196–219; that stretch reads ETLMYACCVLMLLIPLSVISVSYT. Residues 220–236 are Cytoplasmic-facing; that stretch reads HILLTVHRMNSAEGRRK. The chain crosses the membrane as a helical span at residues 237-259; that stretch reads AFATCSSHIMVVSVFYGAAFYTN. Topologically, residues 260–272 are extracellular; the sequence is VLPHSYHTPEKDK. A helical membrane pass occupies residues 273 to 292; the sequence is VVSAFYTILTPMLNPLIYSL. Topologically, residues 293 to 323 are cytoplasmic; it reads RNKDVAAALRKVLGRCGSSQSIRVATVIRKG.

It belongs to the G-protein coupled receptor 1 family.

The protein resides in the cell membrane. Functionally, odorant receptor. The polypeptide is Olfactory receptor 2T35 (OR2T35) (Homo sapiens (Human)).